The chain runs to 390 residues: Succinate--CoA ligase [ADP-forming] subunit beta (390 aa).

In terms of domain architecture, ATP-grasp spans 9 to 245; the sequence is KHLLKKYNIP…TTQEDEHETM (237 aa). ATP contacts are provided by residues Lys-46, 53–55, Glu-99, Ser-102, and Glu-107; that span reads GRG. The Mg(2+) site is built by Asn-200 and Asp-214. Substrate is bound by residues Asn-265 and 322 to 324; that span reads GIV.

Belongs to the succinate/malate CoA ligase beta subunit family. Heterotetramer of two alpha and two beta subunits. Mg(2+) is required as a cofactor.

The catalysed reaction is succinate + ATP + CoA = succinyl-CoA + ADP + phosphate. It carries out the reaction GTP + succinate + CoA = succinyl-CoA + GDP + phosphate. The protein operates within carbohydrate metabolism; tricarboxylic acid cycle; succinate from succinyl-CoA (ligase route): step 1/1. Functionally, succinyl-CoA synthetase functions in the citric acid cycle (TCA), coupling the hydrolysis of succinyl-CoA to the synthesis of either ATP or GTP and thus represents the only step of substrate-level phosphorylation in the TCA. The beta subunit provides nucleotide specificity of the enzyme and binds the substrate succinate, while the binding sites for coenzyme A and phosphate are found in the alpha subunit. The sequence is that of Succinate--CoA ligase [ADP-forming] subunit beta from Coxiella burnetii (strain RSA 493 / Nine Mile phase I).